Consider the following 398-residue polypeptide: Phosphoglycerate kinase (398 aa).

Residues 23–25 (DLN), Arg-38, 61–64 (HFGR), Arg-119, and Arg-152 contribute to the substrate site. Residues Lys-202, Glu-324, and 354–357 (GGDT) each bind ATP.

It belongs to the phosphoglycerate kinase family. In terms of assembly, monomer.

The protein resides in the cytoplasm. The enzyme catalyses (2R)-3-phosphoglycerate + ATP = (2R)-3-phospho-glyceroyl phosphate + ADP. It functions in the pathway carbohydrate degradation; glycolysis; pyruvate from D-glyceraldehyde 3-phosphate: step 2/5. This Bradyrhizobium diazoefficiens (strain JCM 10833 / BCRC 13528 / IAM 13628 / NBRC 14792 / USDA 110) protein is Phosphoglycerate kinase.